Reading from the N-terminus, the 458-residue chain is Argininosuccinate lyase (458 aa).

It belongs to the lyase 1 family. Argininosuccinate lyase subfamily.

It is found in the cytoplasm. It carries out the reaction 2-(N(omega)-L-arginino)succinate = fumarate + L-arginine. It functions in the pathway amino-acid biosynthesis; L-arginine biosynthesis; L-arginine from L-ornithine and carbamoyl phosphate: step 3/3. The protein is Argininosuccinate lyase of Pelobacter propionicus (strain DSM 2379 / NBRC 103807 / OttBd1).